The following is a 753-amino-acid chain: Replication restart protein PriA (753 aa).

One can recognise a Helicase ATP-binding domain in the interval 228-395 (SLVAEQFQTC…LSKKYTLSVL (168 aa)). Residue 241–248 (GVTGSGKT) coordinates ATP. Positions 337–340 (DEEH) match the DEAH box motif. Zn(2+)-binding residues include C458, C461, C467, C470, C485, C488, C499, and C502. The Helicase C-terminal domain occupies 491 to 646 (RLSKPITSCP…DFPAFYKEEI (156 aa)).

It belongs to the helicase family. PriA subfamily. As to quaternary structure, component of the replication restart primosome. Zn(2+) is required as a cofactor.

The catalysed reaction is Couples ATP hydrolysis with the unwinding of duplex DNA by translocating in the 3'-5' direction.. It catalyses the reaction ATP + H2O = ADP + phosphate + H(+). Functionally, initiates the restart of stalled replication forks, which reloads the replicative helicase on sites other than the origin of replication. Recognizes and binds to abandoned replication forks and remodels them to uncover a helicase loading site. Promotes assembly of the primosome at these replication forks. The sequence is that of Replication restart protein PriA from Chlamydia trachomatis serovar D (strain ATCC VR-885 / DSM 19411 / UW-3/Cx).